The sequence spans 159 residues: uncharacterized protein (159 aa).

It belongs to the SufE family.

This is an uncharacterized protein from Synechocystis sp. (strain ATCC 27184 / PCC 6803 / Kazusa).